A 232-amino-acid chain; its full sequence is 5'-methylthioadenosine/S-adenosylhomocysteine nucleosidase (232 aa).

Glu12 acts as the Proton acceptor in catalysis. Residues Gly78, Val152, and 173 to 174 (ME) contribute to the substrate site. Asp197 acts as the Proton donor in catalysis.

Belongs to the PNP/UDP phosphorylase family. MtnN subfamily. Homodimer.

It carries out the reaction S-adenosyl-L-homocysteine + H2O = S-(5-deoxy-D-ribos-5-yl)-L-homocysteine + adenine. The enzyme catalyses S-methyl-5'-thioadenosine + H2O = 5-(methylsulfanyl)-D-ribose + adenine. It catalyses the reaction 5'-deoxyadenosine + H2O = 5-deoxy-D-ribose + adenine. Its pathway is amino-acid biosynthesis; L-methionine biosynthesis via salvage pathway; S-methyl-5-thio-alpha-D-ribose 1-phosphate from S-methyl-5'-thioadenosine (hydrolase route): step 1/2. In terms of biological role, catalyzes the irreversible cleavage of the glycosidic bond in both 5'-methylthioadenosine (MTA) and S-adenosylhomocysteine (SAH/AdoHcy) to adenine and the corresponding thioribose, 5'-methylthioribose and S-ribosylhomocysteine, respectively. Also cleaves 5'-deoxyadenosine, a toxic by-product of radical S-adenosylmethionine (SAM) enzymes, into 5-deoxyribose and adenine. Thus, is required for in vivo function of the radical SAM enzymes biotin synthase and lipoic acid synthase, that are inhibited by 5'-deoxyadenosine accumulation. The polypeptide is 5'-methylthioadenosine/S-adenosylhomocysteine nucleosidase (Buchnera aphidicola subsp. Acyrthosiphon pisum (strain 5A)).